The following is a 354-amino-acid chain: Protein-arginine kinase (354 aa).

The Phosphagen kinase C-terminal domain occupies 24-254 (IVLSSRIRLA…QQIIQQEKLA (231 aa)). Residues 27–31 (SSRIR), His92, Arg125, 176–180 (RASVM), and 207–212 (RGIYGE) each bind ATP. Residues 337–342 (RDYRRA) carry the RDXXRA motif of the pArg binding pocket involved in allosteric regulation motif.

The protein belongs to the ATP:guanido phosphotransferase family.

It carries out the reaction L-arginyl-[protein] + ATP = N(omega)-phospho-L-arginyl-[protein] + ADP + H(+). Appears to be allosterically activated by the binding of pArg-containing polypeptides to the pArg-binding pocket localized in the C-terminal domain of McsB. In terms of biological role, catalyzes the specific phosphorylation of arginine residues in a large number of proteins. Is part of the bacterial stress response system. Protein arginine phosphorylation has a physiologically important role and is involved in the regulation of many critical cellular processes, such as protein homeostasis, motility, competence, and stringent and stress responses, by regulating gene expression and protein activity. The polypeptide is Protein-arginine kinase (Bacillus cereus (strain B4264)).